A 578-amino-acid polypeptide reads, in one-letter code: Proline--tRNA ligase (578 aa).

It belongs to the class-II aminoacyl-tRNA synthetase family. ProS type 1 subfamily. Homodimer.

It is found in the cytoplasm. The enzyme catalyses tRNA(Pro) + L-proline + ATP = L-prolyl-tRNA(Pro) + AMP + diphosphate. Functionally, catalyzes the attachment of proline to tRNA(Pro) in a two-step reaction: proline is first activated by ATP to form Pro-AMP and then transferred to the acceptor end of tRNA(Pro). As ProRS can inadvertently accommodate and process non-cognate amino acids such as alanine and cysteine, to avoid such errors it has two additional distinct editing activities against alanine. One activity is designated as 'pretransfer' editing and involves the tRNA(Pro)-independent hydrolysis of activated Ala-AMP. The other activity is designated 'posttransfer' editing and involves deacylation of mischarged Ala-tRNA(Pro). The misacylated Cys-tRNA(Pro) is not edited by ProRS. This Burkholderia vietnamiensis (strain G4 / LMG 22486) (Burkholderia cepacia (strain R1808)) protein is Proline--tRNA ligase.